A 123-amino-acid chain; its full sequence is ATP synthase epsilon chain (123 aa).

The protein belongs to the ATPase epsilon chain family. F-type ATPases have 2 components, CF(1) - the catalytic core - and CF(0) - the membrane proton channel. CF(1) has five subunits: alpha(3), beta(3), gamma(1), delta(1), epsilon(1). CF(0) has three main subunits: a, b and c.

It localises to the cell inner membrane. Functionally, produces ATP from ADP in the presence of a proton gradient across the membrane. This is ATP synthase epsilon chain from Helicobacter pylori (strain Shi470).